A 488-amino-acid chain; its full sequence is Metalloreductase STEAP3 (488 aa).

At 1 to 207 (MSGEMDKPLI…AREVEAIPLR (207 aa)) the chain is on the cytoplasmic side. S11, S17, and S20 each carry phosphoserine. NADP(+)-binding positions include 36–39 (SGDF), 58–59 (SR), 91–98 (VFREHYSS), N116, and A151. FAD contacts are provided by W152 and D160. A helical membrane pass occupies residues 208 to 228 (LLPSWKVPTLLALGLFVCFYA). Position 229 (Y229) interacts with Fe(3+). Residues 229 to 258 (YNFIRDVLQPYIRKDENKFYKMPLSVVNTT) lie on the Vesicular side of the membrane. Residue N256 is glycosylated (N-linked (GlcNAc...) asparagine). The chain crosses the membrane as a helical span at residues 259-279 (LPCVAYVLLSLVYLPGVLAAA). The 149-residue stretch at 259-407 (LPCVAYVLLS…LGFVALMLST (149 aa)) folds into the Ferric oxidoreductase domain. Residues 280-304 (LQLRRGTKYQRFPDWLDHWLQHRKQ) lie on the Cytoplasmic side of the membrane. FAD-binding residues include Q281, R302, and K303. Residues 305-325 (IGLLSFFFAMLHALYSFCLPL) traverse the membrane as a helical segment. A heme b-binding site is contributed by H316. Residue Y319 participates in Fe(3+) binding. Residues 326-358 (RRSHRYDLVNLAVKQVLANKSRLWVEEEVWRME) are Vesicular-facing. The chain crosses the membrane as a helical span at residues 359–379 (IYLSLGVLALGMLSLLAVTSI). Position 378 (S378) interacts with FAD. Topologically, residues 380 to 390 (PSIANSLNWKE) are cytoplasmic. A helical transmembrane segment spans residues 391-411 (FSFVQSTLGFVALMLSTMHTL). Residue Q395 participates in FAD binding. Residue H409 participates in heme b binding. The Vesicular segment spans residues 412-433 (TYGWTRAFEENHYKFYLPPTFT). The helical transmembrane segment at 434–454 (LTLLLPCVIILAKGLFLLPCL) threads the bilayer. At 455-488 (SHRLTKIRRGWERDGAVKFMLPAGHTQGEKTSHV) the chain is on the cytoplasmic side. S486 bears the Phosphoserine mark.

The protein belongs to the STEAP family. As to quaternary structure, homodimer. Interacts with BNIP3L, MYT1, RHBDL4/RHBDD1 and TCTP. FAD is required as a cofactor. The cofactor is heme b. Proteolytically cleaved by RHBDL4/RHBDD1. RHBDL4/RHBDD1-induced cleavage occurs at multiple sites in a glycosylation-independent manner. In terms of processing, glycosylated.

Its subcellular location is the endosome membrane. The enzyme catalyses 2 Fe(2+) + NADP(+) + H(+) = 2 Fe(3+) + NADPH. It carries out the reaction 2 Cu(+) + NADP(+) + H(+) = 2 Cu(2+) + NADPH. Integral membrane protein that functions as a NADPH-dependent ferric-chelate reductase, using NADPH from one side of the membrane to reduce a Fe(3+) chelate that is bound on the other side of the membrane. Mediates sequential transmembrane electron transfer from NADPH to FAD and onto heme, and finally to the Fe(3+) chelate. Can also reduce Cu(2+) to Cu(1+). Mediates efficient transferrin-dependent iron uptake in erythroid cells. May play a role downstream of p53/TP53 to interface apoptosis and cell cycle progression. Indirectly involved in exosome secretion by facilitating the secretion of proteins such as TCTP. The chain is Metalloreductase STEAP3 (Steap3) from Rattus norvegicus (Rat).